An 86-amino-acid chain; its full sequence is Large ribosomal subunit protein bL31 (86 aa).

The protein belongs to the bacterial ribosomal protein bL31 family. Type A subfamily. As to quaternary structure, part of the 50S ribosomal subunit.

In terms of biological role, binds the 23S rRNA. The chain is Large ribosomal subunit protein bL31 from Parasynechococcus marenigrum (strain WH8102).